Consider the following 132-residue polypeptide: Outer membrane protein RomA (132 aa).

It to M.tuberculosis Rv0906.

It is found in the cell outer membrane. The polypeptide is Outer membrane protein RomA (romA) (Klebsiella pneumoniae).